The primary structure comprises 353 residues: UDP-N-acetylglucosamine--N-acetylmuramyl-(pentapeptide) pyrophosphoryl-undecaprenol N-acetylglucosamine transferase (353 aa).

Residues 11–13 (SAG), Arg164, Ser194, and Gln289 each bind UDP-N-acetyl-alpha-D-glucosamine.

The protein belongs to the glycosyltransferase 28 family. MurG subfamily.

The protein resides in the cell membrane. It catalyses the reaction di-trans,octa-cis-undecaprenyl diphospho-N-acetyl-alpha-D-muramoyl-L-alanyl-D-glutamyl-meso-2,6-diaminopimeloyl-D-alanyl-D-alanine + UDP-N-acetyl-alpha-D-glucosamine = di-trans,octa-cis-undecaprenyl diphospho-[N-acetyl-alpha-D-glucosaminyl-(1-&gt;4)]-N-acetyl-alpha-D-muramoyl-L-alanyl-D-glutamyl-meso-2,6-diaminopimeloyl-D-alanyl-D-alanine + UDP + H(+). The protein operates within cell wall biogenesis; peptidoglycan biosynthesis. In terms of biological role, cell wall formation. Catalyzes the transfer of a GlcNAc subunit on undecaprenyl-pyrophosphoryl-MurNAc-pentapeptide (lipid intermediate I) to form undecaprenyl-pyrophosphoryl-MurNAc-(pentapeptide)GlcNAc (lipid intermediate II). This Clostridium kluyveri (strain ATCC 8527 / DSM 555 / NBRC 12016 / NCIMB 10680 / K1) protein is UDP-N-acetylglucosamine--N-acetylmuramyl-(pentapeptide) pyrophosphoryl-undecaprenol N-acetylglucosamine transferase.